The chain runs to 338 residues: Cell division protein ZipA (338 aa).

Residues methionine 1–serine 2 lie on the Periplasmic side of the membrane. The helical transmembrane segment at leucine 3–valine 23 threads the bilayer. Residues arginine 24 to alanine 338 lie on the Cytoplasmic side of the membrane. Positions serine 33–asparagine 192 are disordered. Basic and acidic residues-rich tracts occupy residues threonine 70–methionine 81 and glutamate 138–glutamate 162.

The protein belongs to the ZipA family. In terms of assembly, interacts with FtsZ via their C-terminal domains.

Its subcellular location is the cell inner membrane. In terms of biological role, essential cell division protein that stabilizes the FtsZ protofilaments by cross-linking them and that serves as a cytoplasmic membrane anchor for the Z ring. Also required for the recruitment to the septal ring of downstream cell division proteins. The polypeptide is Cell division protein ZipA (Marinobacter nauticus (strain ATCC 700491 / DSM 11845 / VT8) (Marinobacter aquaeolei)).